The chain runs to 200 residues: 3-isopropylmalate dehydratase small subunit (200 aa).

Belongs to the LeuD family. LeuD type 1 subfamily. As to quaternary structure, heterodimer of LeuC and LeuD.

It catalyses the reaction (2R,3S)-3-isopropylmalate = (2S)-2-isopropylmalate. Its pathway is amino-acid biosynthesis; L-leucine biosynthesis; L-leucine from 3-methyl-2-oxobutanoate: step 2/4. In terms of biological role, catalyzes the isomerization between 2-isopropylmalate and 3-isopropylmalate, via the formation of 2-isopropylmaleate. This is 3-isopropylmalate dehydratase small subunit from Proteus mirabilis (strain HI4320).